The sequence spans 328 residues: Renalase (328 aa).

Residues Ala13, 32-33, Arg40, and 56-57 each bind FAD; these read DK and QY. Substrate is bound by residues 57 to 61 and 96 to 98; these read YFTAR and SPD. Ile128 contributes to the FAD binding site. Thr185 provides a ligand contact to substrate. Position 302 (Asp302) interacts with FAD. Residue Arg308 coordinates substrate. Val309 lines the FAD pocket.

It belongs to the bacterial renalase family. It depends on FAD as a cofactor.

It catalyses the reaction 1,2-dihydro-beta-NAD + O2 + H(+) = H2O2 + NAD(+). It carries out the reaction 1,2-dihydro-beta-NADP + O2 + H(+) = H2O2 + NADP(+). The catalysed reaction is 1,6-dihydro-beta-NADP + O2 + H(+) = H2O2 + NADP(+). The enzyme catalyses 1,6-dihydro-beta-NAD + O2 + H(+) = H2O2 + NAD(+). Its function is as follows. Catalyzes the oxidation of the 1,2-dihydro- and 1,6-dihydro- isomeric forms of beta-NAD(P) back to beta-NAD(P)+. Has a preference for 1,2-dihydro-beta-NAD as substrate. May serve to protect primary metabolism dehydrogenases from inhibition by the 1,2-dihydro- and 1,6-dihydro-beta-NAD(P) isomers. This Pseudomonas savastanoi pv. phaseolicola (strain 1448A / Race 6) (Pseudomonas syringae pv. phaseolicola (strain 1448A / Race 6)) protein is Renalase.